Reading from the N-terminus, the 183-residue chain is Peptidyl-tRNA hydrolase (183 aa).

Tyr14 contributes to the tRNA binding site. The active-site Proton acceptor is the His19. 3 residues coordinate tRNA: Tyr64, Asn66, and Asn112.

This sequence belongs to the PTH family. Monomer.

The protein resides in the cytoplasm. It carries out the reaction an N-acyl-L-alpha-aminoacyl-tRNA + H2O = an N-acyl-L-amino acid + a tRNA + H(+). In terms of biological role, hydrolyzes ribosome-free peptidyl-tRNAs (with 1 or more amino acids incorporated), which drop off the ribosome during protein synthesis, or as a result of ribosome stalling. Its function is as follows. Catalyzes the release of premature peptidyl moieties from peptidyl-tRNA molecules trapped in stalled 50S ribosomal subunits, and thus maintains levels of free tRNAs and 50S ribosomes. The chain is Peptidyl-tRNA hydrolase from Anaplasma phagocytophilum (strain HZ).